The sequence spans 201 residues: Lymphocyte antigen 6 complex locus protein G5b (201 aa).

The first 18 residues, 1–18, serve as a signal peptide directing secretion; sequence MKVHMLVGVLVMVGFTVG. The region spanning 26-118 is the UPAR/Ly6 domain; it reads RTCHFCLVED…SPQLQSSLPE (93 aa). Disulfide bonds link C28–C55, C31–C40, C47–C73, C81–C98, and C99–C104. 2 N-linked (GlcNAc...) asparagine glycosylation sites follow: N141 and N183.

Forms oligomer. Post-translationally, N-glycosylated.

It is found in the secreted. This Homo sapiens (Human) protein is Lymphocyte antigen 6 complex locus protein G5b (LY6G5B).